We begin with the raw amino-acid sequence, 333 residues long: DNA-directed RNA polymerase subunit alpha (333 aa).

An alpha N-terminal domain (alpha-NTD) region spans residues 1–227 (MRKIKVAPFM…VMNKQLSVFN (227 aa)). An alpha C-terminal domain (alpha-CTD) region spans residues 247–333 (ELKPFLAAVD…LVKKLEQLKA (87 aa)).

This sequence belongs to the RNA polymerase alpha chain family. In terms of assembly, homodimer. The RNAP catalytic core consists of 2 alpha, 1 beta, 1 beta' and 1 omega subunit. When a sigma factor is associated with the core the holoenzyme is formed, which can initiate transcription.

It catalyses the reaction RNA(n) + a ribonucleoside 5'-triphosphate = RNA(n+1) + diphosphate. Its function is as follows. DNA-dependent RNA polymerase catalyzes the transcription of DNA into RNA using the four ribonucleoside triphosphates as substrates. The sequence is that of DNA-directed RNA polymerase subunit alpha from Sulfurovum sp. (strain NBC37-1).